Reading from the N-terminus, the 201-residue chain is MQEFTKVTGVAAPMPLVNIDTDMIIPKQFLKTIQRSGLGKNLFDEMRYNPDGSEIPEFVLNQPAYRDAQIIVAGDNFGCGSSREHAPWALLDFGIRCVISTSFADIFYNNCFKNGILPIVMPPEVVEVLMEDARRGANARMTVDLEAQTVTTSDGQSFPFQVDSFRRHCLMNGLDDIGLTLEKAASIDGFERDLATLRPWV.

It belongs to the LeuD family. LeuD type 1 subfamily. In terms of assembly, heterodimer of LeuC and LeuD.

It catalyses the reaction (2R,3S)-3-isopropylmalate = (2S)-2-isopropylmalate. It participates in amino-acid biosynthesis; L-leucine biosynthesis; L-leucine from 3-methyl-2-oxobutanoate: step 2/4. Catalyzes the isomerization between 2-isopropylmalate and 3-isopropylmalate, via the formation of 2-isopropylmaleate. In Cereibacter sphaeroides (strain ATCC 17029 / ATH 2.4.9) (Rhodobacter sphaeroides), this protein is 3-isopropylmalate dehydratase small subunit.